The sequence spans 220 residues: Zinc finger protein 36 (220 aa).

Residues phenylalanine 73–histidine 95 form a C2H2-type 1 zinc finger. The segment at glycine 90–proline 134 is disordered. Low complexity predominate over residues alanine 107 to alanine 117. The C2H2-type 2 zinc finger occupies histidine 135 to histidine 157.

In terms of biological role, probable transcription factor involved in abscisic acid (ABA) signaling. Required for the regulation of the cross-talk between NADPH oxidase, hydrogen peroxide and MAP kinase in ABA signaling. Regulates the expression of the NADPH oxidase genes RBOHB and RBOHE, and the MAPK genes MPK1, MPK4, MPK5, MPK7 and MPK14. Regulates ABA-induced hydrogen peroxide production and antioxidant defense. Required for tolerance to water stress and oxidative stress. The chain is Zinc finger protein 36 from Oryza sativa subsp. japonica (Rice).